Consider the following 1957-residue polypeptide: [F-actin]-monooxygenase MICAL2 (1957 aa).

The interval 2-494 is monooxygenase domain; sequence GENEDEKQAQ…KHLYITKELE (493 aa). Residues Cys-97, 116–118, 123–125, Phe-183, Tyr-298, and Asp-398 each bind FAD; these read EKR and RNN. Positions 516–619 constitute a Calponin-homology (CH) domain; sequence DIRPSKLLTW…MVMYLSKFYE (104 aa). A Phosphoserine modification is found at Ser-631. The Nuclear localization signal signature appears at 660–681; sequence RKRTPRVDGQTGENDMNKRRRK. 2 disordered regions span residues 660-714 and 886-942; these read RKRT…NQNK and QNKL…HPSH. The segment covering 687 to 714 has biased composition (polar residues); it reads DEPSNFSSRSLGSNQECGSSKEGGNQNK. Positions 899-910 are enriched in pro residues; sequence PPSPPSRLPSPD. A compositionally biased stretch (low complexity) spans 911 to 925; the sequence is PAASSSPSTVDSASP. One can recognise an LIM zinc-binding domain in the interval 1000 to 1062; sequence DTCYFCKKRV…KPHFIHCKTN (63 aa). Positions 1002, 1005, 1023, 1026, 1029, 1032, 1052, and 1055 each coordinate Zn(2+). 6 disordered regions span residues 1070–1143, 1168–1243, 1258–1345, 1361–1431, 1467–1626, and 1675–1779; these read AELK…PSEW, SEDS…TPSK, VNKR…LYLP, GEDG…EGGP, KAGE…SPPC, and ESRQ…KEKK. Residues 1185 to 1195 show a composition bias toward basic and acidic residues; that stretch reads SHTEPCEEKPW. Polar residues predominate over residues 1232 to 1243; the sequence is RANSFQSPTPSK. The segment covering 1275–1294 has biased composition (low complexity); it reads LPSSSSHSSSPPSSSSTSVS. Residues 1302 to 1316 are compositionally biased toward polar residues; that stretch reads SPPQMTASEPLSQVS. The segment at 1324 to 1363 is interaction with MAPK1; sequence TPNFRRRAVAQGAPREIPLYLPHHPKPEWAEYCLVSPGED. Basic and acidic residues-rich tracts occupy residues 1388–1402 and 1413–1431; these read SNHRDPHPIWGKDRS and GEDREKGSTGARKEEEGGP. Residues 1485-1496 show a composition bias toward low complexity; the sequence is VLKPVRPLLLPR. Over residues 1552–1562 the composition is skewed to basic and acidic residues; sequence GGKKAWAKQES. Positions 1570–1579 are enriched in polar residues; it reads CTRSFSLRKT. Ser-1688 carries the phosphoserine modification. The span at 1718–1733 shows a compositional bias: pro residues; that stretch reads APPPPPPPPPPPPPPT. Positions 1751 to 1762 are enriched in low complexity; that stretch reads ASSSASSTSSSS. The bMERB domain maps to 1796 to 1945; sequence KQEELKRLYK…EKAEDQHFES (150 aa).

Belongs to the Mical family. As to quaternary structure, interacts with PLXNA4. Interacts with RAB1B. Interacts with MAPK1/ERK2. Interacts with RAB35, RAB8A, RAB10, RAB13 and RAB15 (in their GTP-bound forms); binding to RAB35 is of low affinity compared to other Rab proteins; at least in case of RAB8A may bind 2 molecules of RAB8A simultaneously through a high and a low affinity binding site, respectively. May interact with MAPK1/ERK2. Interacts with CORO1C; this interaction recruits MICAL2 to the actin filaments. FAD is required as a cofactor.

It localises to the nucleus. Its subcellular location is the cytoplasm. The catalysed reaction is L-methionyl-[F-actin] + NADPH + O2 + H(+) = L-methionyl-(R)-S-oxide-[F-actin] + NADP(+) + H2O. Specifically inhibited by CCG-1423, a small molecule inhibitor of SRF:MKL1/MRTF-A-dependent transcription. Methionine monooxygenase that promotes depolymerization of F-actin by mediating oxidation of residues 'Met-44' and 'Met-47' on actin to form methionine-sulfoxide, resulting in actin filament disassembly and preventing repolymerization. Regulates the disassembly of branched actin networks also by oxidizing ARP3B-containing ARP2/3 complexes leading to ARP3B dissociation from the network. Acts as a key regulator of the SRF signaling pathway elicited by nerve growth factor and serum: mediates oxidation and subsequent depolymerization of nuclear actin, leading to increase MKL1/MRTF-A presence in the nucleus and promote SRF:MKL1/MRTF-A-dependent gene transcription. Does not activate SRF:MKL1/MRTF-A through RhoA. In Homo sapiens (Human), this protein is [F-actin]-monooxygenase MICAL2.